The sequence spans 501 residues: GDP-fucose protein O-fucosyltransferase 4 (501 aa).

Residues 1–10 lie on the Cytoplasmic side of the membrane; sequence MLLQMAGRGK. The chain crosses the membrane as a helical; Signal-anchor for type II membrane protein span at residues 11–31; sequence MVPCVCLGLLGVLCWVWVSFA. Residues 32-501 are Lumenal-facing; sequence SFPDEQLSLG…MAVRRARGKN (470 aa). Asn-173 carries an N-linked (GlcNAc...) asparagine glycan. An intrachain disulfide couples Cys-396 to Cys-399. Asn-428 and Asn-478 each carry an N-linked (GlcNAc...) asparagine glycan.

This sequence belongs to the glycosyltransferase 10 family.

The protein resides in the endoplasmic reticulum membrane. The catalysed reaction is L-threonyl-[protein] + GDP-beta-L-fucose = 3-O-(alpha-L-fucosyl)-L-threonyl-[protein] + GDP + H(+). It catalyses the reaction L-seryl-[protein] + GDP-beta-L-fucose = 3-O-(alpha-L-fucosyl)-L-seryl-[protein] + GDP + H(+). It participates in protein modification; protein glycosylation. Functionally, protein O-fucosyltransferase that specifically catalyzes O-fucosylation of serine or threonine residues in EMI domains of target proteins. Attaches fucose through an O-glycosidic linkage. O-fucosylation of EMI domain-containing proteins may be required for facilitating protein folding and secretion. The chain is GDP-fucose protein O-fucosyltransferase 4 (fut11) from Takifugu rubripes (Japanese pufferfish).